The sequence spans 706 residues: Paxillin-like protein 1 (706 aa).

Disordered stretches follow at residues 24-192 (ERAG…EQDL), 222-258 (VLDQ…LNFE), 279-341 (AKQE…TKVE), and 514-537 (IDNS…SSDA). Residues 35-64 (PFSSQRNASTGSLQASVKSPPITRQRNVSA) are compositionally biased toward polar residues. A phosphoserine mark is found at serine 43 and serine 63. 2 stretches are compositionally biased toward low complexity: residues 73–86 (KSAY…AYSS) and 117–129 (SSRP…SISR). Basic and acidic residues-rich tracts occupy residues 130–150 (PSER…DRQA) and 222–236 (VLDQ…KEES). Positions 237-252 (SIEYESEGQQEDENDI) are enriched in acidic residues. The segment covering 279–290 (AKQEEKNTEPKI) has biased composition (basic and acidic residues). A compositionally biased stretch (polar residues) spans 296-308 (TRESNTPSLTMNA). 2 LIM zinc-binding domains span residues 556-612 (CRAC…CQKH) and 621-672 (CKVC…CGNH).

The polypeptide is Paxillin-like protein 1 (PXL1) (Saccharomyces cerevisiae (strain ATCC 204508 / S288c) (Baker's yeast)).